Reading from the N-terminus, the 194-residue chain is Pyridoxine/pyridoxamine 5'-phosphate oxidase (194 aa).

Residues Arg-42–Lys-47, Phe-57–Thr-58, Arg-63, Lys-64, and Gln-86 contribute to the FMN site. Substrate is bound at residue Lys-47. Substrate is bound by residues Tyr-104, Arg-108, and Ser-112. FMN is bound by residues Gln-121–Ser-122 and Trp-166. Substrate is bound at residue Arg-172–His-174. Arg-176 contacts FMN.

This sequence belongs to the pyridoxamine 5'-phosphate oxidase family. Homodimer. FMN is required as a cofactor.

The catalysed reaction is pyridoxamine 5'-phosphate + O2 + H2O = pyridoxal 5'-phosphate + H2O2 + NH4(+). It carries out the reaction pyridoxine 5'-phosphate + O2 = pyridoxal 5'-phosphate + H2O2. The protein operates within cofactor metabolism; pyridoxal 5'-phosphate salvage; pyridoxal 5'-phosphate from pyridoxamine 5'-phosphate: step 1/1. It participates in cofactor metabolism; pyridoxal 5'-phosphate salvage; pyridoxal 5'-phosphate from pyridoxine 5'-phosphate: step 1/1. Functionally, catalyzes the oxidation of either pyridoxine 5'-phosphate (PNP) or pyridoxamine 5'-phosphate (PMP) into pyridoxal 5'-phosphate (PLP). The protein is Pyridoxine/pyridoxamine 5'-phosphate oxidase of Ehrlichia ruminantium (strain Welgevonden).